A 436-amino-acid polypeptide reads, in one-letter code: UDP-N-acetylmuramate--L-alanine ligase (436 aa).

110-116 (GAHGKTS) lines the ATP pocket.

It belongs to the MurCDEF family.

The protein resides in the cytoplasm. It catalyses the reaction UDP-N-acetyl-alpha-D-muramate + L-alanine + ATP = UDP-N-acetyl-alpha-D-muramoyl-L-alanine + ADP + phosphate + H(+). Its pathway is cell wall biogenesis; peptidoglycan biosynthesis. Functionally, cell wall formation. The protein is UDP-N-acetylmuramate--L-alanine ligase of Lacticaseibacillus casei (strain BL23) (Lactobacillus casei).